The sequence spans 262 residues: Transcription factor Adf-1 (262 aa).

Positions 24–104 (NLIEAVKLNP…QMQFLVDSIR (81 aa)) form a DNA-binding region, MADF. The BESS domain maps to 217–256 (SAEDQSFGMVVTDMLNTLGVRQKAEAKVHIIKYLTDMQLL).

In terms of processing, O-glycosylated; contains N-acetylglucosamine side chains.

The protein resides in the nucleus. May play an important role not only in the regulation of Adh expression but also in the transcription of other genes. This Drosophila melanogaster (Fruit fly) protein is Transcription factor Adf-1 (Adf1).